The primary structure comprises 790 residues: Pre-mRNA-splicing factor cwf3 (790 aa).

HAT repeat units follow at residues 12–44, 45–77, 89–121, 123–157, 159–190, 193–228, 233–266, 268–303, 331–364, 368–402, 404–440, 457–492, 494–526, 528–562, 567–601, 639–673, and 675–709; these read DLIN…THEG, STLE…LRVA, EAFA…FLMK, PNVT…YAED, GGLF…KLGL, EAAR…LVVQ, TQNI…YYIR, GDYE…FEEQ, KILD…FLED, KVVQ…FYEN, DDLE…MELR, APRK…LEES, GTIE…LLEE, AYFE…KFVK, THME…FEEK, YGVL…METK, and GEID…FEIR. The disordered stretch occupies residues 769–790; sequence LAGFVLSKSNPQETSKITGEEN. Positions 775–790 are enriched in polar residues; it reads SKSNPQETSKITGEEN.

It belongs to the crooked-neck family. As to quaternary structure, belongs to the 40S cdc5-associated complex (or cwf complex), a spliceosome sub-complex reminiscent of a late-stage spliceosome composed of the U2, U5 and U6 snRNAs and at least brr2, cdc5, cwf2/prp3, cwf3/syf1, cwf4/syf3, cwf5/ecm2, spp42/cwf6, cwf7/spf27, cwf8, cwf9, cwf10, cwf11, cwf12, prp45/cwf13, cwf14, cwf15, cwf16, cwf17, cwf18, cwf19, cwf20, cwf21, cwf22, cwf23, cwf24, cwf25, cwf26, cyp7/cwf27, cwf28, cwf29/ist3, lea1, msl1, prp5/cwf1, prp10, prp12/sap130, prp17, prp22, sap61, sap62, sap114, sap145, slu7, smb1, smd1, smd3, smf1, smg1 and syf2.

The protein resides in the nucleus. Its function is as follows. Involved in pre-mRNA splicing and cell cycle progression. This is Pre-mRNA-splicing factor cwf3 (cwf3) from Schizosaccharomyces pombe (strain 972 / ATCC 24843) (Fission yeast).